Reading from the N-terminus, the 390-residue chain is Transcription factor bHLH76 (390 aa).

Residues 147–217 are disordered; the sequence is NVSEDSQSSG…SEKQPSDSLK (71 aa). A compositionally biased stretch (basic and acidic residues) spans 207-217; the sequence is NSEKQPSDSLK. The bHLH domain occupies 229-279; the sequence is QATNSHSLAERVRREKISERMKFLQDLVPGCDKVTGKAVMLDEIINYVQSL.

In terms of assembly, homodimer. Interacts with IBH1. Binds reversibly to CRY2 after blue light illumination. Expressed constitutively in roots, leaves, stems, and flowers.

The protein resides in the nucleus. Transcriptional activator involved in cell elongation. Regulates the expression of a subset of genes involved in cell expansion by binding to the G-box motif. Binds to chromatin DNA of the FT gene and promotes its expression, and thus triggers flowering in response to blue light. The chain is Transcription factor bHLH76 (BHLH76) from Arabidopsis thaliana (Mouse-ear cress).